The sequence spans 338 residues: Pyridoxal 5'-phosphate synthase subunit PdxS (338 aa).

Asp-66 is a binding site for D-ribose 5-phosphate. Lys-123 functions as the Schiff-base intermediate with D-ribose 5-phosphate in the catalytic mechanism. Gly-195 provides a ligand contact to D-ribose 5-phosphate. Lys-207 is a D-glyceraldehyde 3-phosphate binding site. D-ribose 5-phosphate is bound by residues Gly-256 and 277 to 278 (GS).

The protein belongs to the PdxS/SNZ family. In the presence of PdxT, forms a dodecamer of heterodimers.

It catalyses the reaction aldehydo-D-ribose 5-phosphate + D-glyceraldehyde 3-phosphate + L-glutamine = pyridoxal 5'-phosphate + L-glutamate + phosphate + 3 H2O + H(+). It functions in the pathway cofactor biosynthesis; pyridoxal 5'-phosphate biosynthesis. In terms of biological role, catalyzes the formation of pyridoxal 5'-phosphate from ribose 5-phosphate (RBP), glyceraldehyde 3-phosphate (G3P) and ammonia. The ammonia is provided by the PdxT subunit. Can also use ribulose 5-phosphate and dihydroxyacetone phosphate as substrates, resulting from enzyme-catalyzed isomerization of RBP and G3P, respectively. The sequence is that of Pyridoxal 5'-phosphate synthase subunit PdxS from Saccharolobus islandicus (strain Y.N.15.51 / Yellowstone #2) (Sulfolobus islandicus).